A 62-amino-acid chain; its full sequence is Large ribosomal subunit protein uL30 (62 aa).

Belongs to the universal ribosomal protein uL30 family. Part of the 50S ribosomal subunit.

The sequence is that of Large ribosomal subunit protein uL30 from Pseudoalteromonas atlantica (strain T6c / ATCC BAA-1087).